The chain runs to 265 residues: Metallo-beta-lactamase VIM-7 (265 aa).

The N-terminal stretch at 1–17 (MFQIRSFLVGISAFVMA) is a signal peptide. The Zn(2+) site is built by His-113, His-115, Asp-117, His-178, Cys-197, and His-239.

This sequence belongs to the metallo-beta-lactamase superfamily. Class-B beta-lactamase family. In terms of assembly, monomer. Zn(2+) is required as a cofactor.

It localises to the periplasm. The catalysed reaction is a beta-lactam + H2O = a substituted beta-amino acid. Class B beta-lactamase which confers resistance to the beta-lactam antibiotics, including penicillins, cephalosporins and carbapenems. Acts via hydrolysis of the beta-lactam ring. Has penicillin-, cephalosporin- and carbapenem-hydrolyzing activities. The chain is Metallo-beta-lactamase VIM-7 from Pseudomonas aeruginosa.